A 266-amino-acid polypeptide reads, in one-letter code: Putative peptidyl-prolyl cis-trans isomerase NifM (266 aa).

The 98-residue stretch at 124–221 (PEQRLTRHLL…LGWHLLWCEA (98 aa)) folds into the PpiC domain.

Belongs to the PpiC/parvulin rotamase family.

The enzyme catalyses [protein]-peptidylproline (omega=180) = [protein]-peptidylproline (omega=0). Functionally, required for the activation and stabilization of the iron-component (NifH) of nitrogenase. Probable PPIase. The polypeptide is Putative peptidyl-prolyl cis-trans isomerase NifM (nifM) (Klebsiella oxytoca).